Here is a 396-residue protein sequence, read N- to C-terminus: Putative pyridoxal phosphate-dependent acyltransferase (396 aa).

111-112 (GF) contributes to the pyridoxal 5'-phosphate binding site. Residue histidine 136 coordinates substrate. Pyridoxal 5'-phosphate is bound by residues serine 186, 211–214 (DDAH), and 241–244 (TLSK). The residue at position 244 (lysine 244) is an N6-(pyridoxal phosphate)lysine. Threonine 358 is a substrate binding site.

It belongs to the class-II pyridoxal-phosphate-dependent aminotransferase family. Homodimer. Requires pyridoxal 5'-phosphate as cofactor.

The protein is Putative pyridoxal phosphate-dependent acyltransferase of Bacillus anthracis.